Reading from the N-terminus, the 169-residue chain is UPF0251 protein MM_2090 (169 aa).

This sequence belongs to the UPF0251 family.

This chain is UPF0251 protein MM_2090, found in Methanosarcina mazei (strain ATCC BAA-159 / DSM 3647 / Goe1 / Go1 / JCM 11833 / OCM 88) (Methanosarcina frisia).